The primary structure comprises 284 residues: Avenin-like b3 (284 aa).

The first 18 residues, Met1–Ala18, serve as a signal peptide directing secretion.

It belongs to the prolamin family. In terms of processing, contains disulfide bonds.

Its function is as follows. Seed storage protein. Might be integrated via inter-chain disulfide bonds within the glutenin polymer. The chain is Avenin-like b3 from Triticum aestivum (Wheat).